We begin with the raw amino-acid sequence, 706 residues long: Parasporal crystal protein Cry18Aa (706 aa).

The protein belongs to the delta endotoxin family.

Its function is as follows. Binds to the brush border membrane vesicles of scarab larvae and somehow damages the gut wall to allow the vegetative cells of P.popilliae to enter the hemolymph. Active on M.melolontha. The polypeptide is Parasporal crystal protein Cry18Aa (cry18Aa) (Paenibacillus popilliae (Bacillus popilliae)).